The sequence spans 183 residues: CyanoP (183 aa).

An N-terminal signal peptide occupies residues 1–19; that stretch reads MLQRFFATALAIFVVLLGG. Residue C20 is the site of N-palmitoyl cysteine attachment. C20 carries the S-diacylglycerol cysteine lipid modification. Residues D31, D34, D54, H58, T63, E87, D91, H142, E163, and E164 each contribute to the Zn(2+) site.

This sequence belongs to the PsbP family. CyanoP subfamily. As to quaternary structure, monomer. Present in very small amounts in PSII. The cofactor is Zn(2+).

It localises to the cellular thylakoid membrane. Functionally, plays a role in the early stages of photosystem II (PSII) assembly; binds to D2 (psbD) and may facilitate its incorporation into PSII. Present in less than 1% of PSII preparations. The chain is CyanoP from Thermosynechococcus vestitus (strain NIES-2133 / IAM M-273 / BP-1).